The following is a 255-amino-acid chain: MKGLRSAFSFFTIIPIKSELDEHLIAYVPLVALFDAALAASLYVAIYGISKLLASFISVSAIYIVNGLNHVDAVADAGDAMMIRNRSRIREVFEDHDVGAGGVFTLIFVYLLALISLSSMDLYIGIFSIILAEFLSKSMMMITLHRSRPLFQGIGSLFIDLYRKHDSLYTVEFVVIPIVLALLSRASIMISVALAFLIFIIVKMAVIRRFGGINGDLAGFIGELGRSIFLMISLIMAQSSVLSTYDILSKIMSSL.

The next 6 helical transmembrane spans lie at 24-44 (LIAY…SLYV), 45-65 (AIYG…IYIV), 98-118 (VGAG…ISLS), 122-142 (LYIG…MMMI), 164-184 (KHDS…ALLS), and 187-207 (SIMI…MAVI).

The protein belongs to the CobS family. Mg(2+) serves as cofactor.

The protein localises to the cell membrane. It catalyses the reaction alpha-ribazole + adenosylcob(III)inamide-GDP = adenosylcob(III)alamin + GMP + H(+). It carries out the reaction alpha-ribazole 5'-phosphate + adenosylcob(III)inamide-GDP = adenosylcob(III)alamin 5'-phosphate + GMP + H(+). The protein operates within cofactor biosynthesis; adenosylcobalamin biosynthesis; adenosylcobalamin from cob(II)yrinate a,c-diamide: step 7/7. Its function is as follows. Joins adenosylcobinamide-GDP and alpha-ribazole to generate adenosylcobalamin (Ado-cobalamin). Also synthesizes adenosylcobalamin 5'-phosphate from adenosylcobinamide-GDP and alpha-ribazole 5'-phosphate. This is Adenosylcobinamide-GDP ribazoletransferase from Thermoplasma acidophilum (strain ATCC 25905 / DSM 1728 / JCM 9062 / NBRC 15155 / AMRC-C165).